Consider the following 368-residue polypeptide: tRNA-specific 2-thiouridylase MnmA (368 aa).

ATP contacts are provided by residues 12–19 (GMSGGVDS) and Met38. The segment at 98–100 (NPD) is interaction with target base in tRNA. Cys103 (nucleophile) is an active-site residue. A disulfide bridge links Cys103 with Cys200. Gly128 is an ATP binding site. The interaction with tRNA stretch occupies residues 150 to 152 (KDQ). The active-site Cysteine persulfide intermediate is Cys200. Residues 313–314 (RY) form an interaction with tRNA region.

The protein belongs to the MnmA/TRMU family. Interacts with TusE.

It is found in the cytoplasm. The enzyme catalyses S-sulfanyl-L-cysteinyl-[protein] + uridine(34) in tRNA + AH2 + ATP = 2-thiouridine(34) in tRNA + L-cysteinyl-[protein] + A + AMP + diphosphate + H(+). In terms of biological role, catalyzes the 2-thiolation of uridine at the wobble position (U34) of tRNA(Lys), tRNA(Glu) and tRNA(Gln), leading to the formation of s(2)U34, the first step of tRNA-mnm(5)s(2)U34 synthesis. Sulfur is provided by IscS, via a sulfur-relay system. Binds ATP and its substrate tRNAs. The protein is tRNA-specific 2-thiouridylase MnmA of Pectobacterium atrosepticum (strain SCRI 1043 / ATCC BAA-672) (Erwinia carotovora subsp. atroseptica).